A 395-amino-acid chain; its full sequence is Chalcone synthase (395 aa).

Position 2 is an N-acetylvaline (Val2). Cys169 is an active-site residue.

Belongs to the thiolase-like superfamily. Chalcone/stilbene synthases family.

The enzyme catalyses (E)-4-coumaroyl-CoA + 3 malonyl-CoA + 3 H(+) = 2',4,4',6'-tetrahydroxychalcone + 3 CO2 + 4 CoA. The protein operates within secondary metabolite biosynthesis; flavonoid biosynthesis. Its function is as follows. The primary product of this enzyme is 4,2',4',6'-tetrahydroxychalcone (also termed naringenin-chalcone or chalcone) which can under specific conditions spontaneously isomerize into naringenin. The protein is Chalcone synthase (CHS) of Cardamine amara (Large bitter-cress).